The sequence spans 109 residues: uncharacterized protein (109 aa).

This is an uncharacterized protein from Mycoplasma genitalium (strain ATCC 33530 / DSM 19775 / NCTC 10195 / G37) (Mycoplasmoides genitalium).